Consider the following 515-residue polypeptide: Maturase K (515 aa).

The protein belongs to the intron maturase 2 family. MatK subfamily.

It localises to the plastid. Its subcellular location is the chloroplast. Usually encoded in the trnK tRNA gene intron. Probably assists in splicing its own and other chloroplast group II introns. This Cedrus atlantica (Atlas cedar) protein is Maturase K.